The primary structure comprises 339 residues: Glycerol-3-phosphate dehydrogenase [NAD(P)+] (339 aa).

Residues serine 15, tyrosine 16, histidine 36, and lysine 110 each contribute to the NADPH site. Lysine 110, glycine 139, and threonine 141 together coordinate sn-glycerol 3-phosphate. Alanine 143 serves as a coordination point for NADPH. 5 residues coordinate sn-glycerol 3-phosphate: lysine 195, aspartate 248, serine 258, arginine 259, and asparagine 260. Lysine 195 (proton acceptor) is an active-site residue. An NADPH-binding site is contributed by arginine 259. Valine 283 and glutamate 285 together coordinate NADPH.

Belongs to the NAD-dependent glycerol-3-phosphate dehydrogenase family.

It localises to the cytoplasm. It carries out the reaction sn-glycerol 3-phosphate + NAD(+) = dihydroxyacetone phosphate + NADH + H(+). It catalyses the reaction sn-glycerol 3-phosphate + NADP(+) = dihydroxyacetone phosphate + NADPH + H(+). The protein operates within membrane lipid metabolism; glycerophospholipid metabolism. In terms of biological role, catalyzes the reduction of the glycolytic intermediate dihydroxyacetone phosphate (DHAP) to sn-glycerol 3-phosphate (G3P), the key precursor for phospholipid synthesis. The chain is Glycerol-3-phosphate dehydrogenase [NAD(P)+] from Enterobacter sp. (strain 638).